A 369-amino-acid chain; its full sequence is Caffeine synthase 1 (369 aa).

Tyr-24 lines the S-adenosyl-L-homocysteine pocket. Thr-31 is a caffeine binding site. Residues Cys-66, Asn-71, Asp-103, Leu-104, Ser-138, and Phe-139 each coordinate S-adenosyl-L-homocysteine. Caffeine-binding residues include Tyr-156, His-159, and Trp-160. Asn-177 is a Mg(2+) binding site. Arg-225 provides a ligand contact to caffeine. Residues Asp-263, Phe-265, and Asn-266 each coordinate Mg(2+). Phe-321 lines the caffeine pocket.

The protein belongs to the methyltransferase superfamily. Type-7 methyltransferase family. Mg(2+) is required as a cofactor.

The enzyme catalyses theobromine + S-adenosyl-L-methionine = caffeine + S-adenosyl-L-homocysteine + H(+). It catalyses the reaction 7-methylxanthine + S-adenosyl-L-methionine = theobromine + S-adenosyl-L-homocysteine + H(+). It functions in the pathway alkaloid biosynthesis. In terms of biological role, involved in the biosynthesis of caffeine. Catalyzes the conversion of 7-methylxanthine (7mX) to theobromine and of theobromine to caffeine. The sequence is that of Caffeine synthase 1 from Camellia crassicolumna (Evergreen tea).